Here is a 300-residue protein sequence, read N- to C-terminus: tRNA dimethylallyltransferase (300 aa).

11 to 18 (GPTAVGKS) lines the ATP pocket. 13 to 18 (TAVGKS) serves as a coordination point for substrate. Positions 35 to 38 (DSIQ) are interaction with substrate tRNA.

Belongs to the IPP transferase family. In terms of assembly, monomer. Mg(2+) serves as cofactor.

The enzyme catalyses adenosine(37) in tRNA + dimethylallyl diphosphate = N(6)-dimethylallyladenosine(37) in tRNA + diphosphate. Catalyzes the transfer of a dimethylallyl group onto the adenine at position 37 in tRNAs that read codons beginning with uridine, leading to the formation of N6-(dimethylallyl)adenosine (i(6)A). The protein is tRNA dimethylallyltransferase of Borreliella afzelii (strain PKo) (Borrelia afzelii).